A 500-amino-acid chain; its full sequence is 4-aminobutyrate aminotransferase, mitochondrial (500 aa).

The N-terminal 28 residues, 1-28, are a transit peptide targeting the mitochondrion; that stretch reads MAFLLITRRLACSSQKNLHLFIPGSRYI. Cys163 contributes to the [2Fe-2S] cluster binding site. Residue 164 to 165 coordinates pyridoxal 5'-phosphate; it reads GS. Cys166 is a binding site for [2Fe-2S] cluster. Arg220 lines the substrate pocket. An N6-succinyllysine modification is found at Lys231. Lys252 carries the post-translational modification N6-acetyllysine; alternate. The residue at position 252 (Lys252) is an N6-succinyllysine; alternate. An N6-acetyllysine mark is found at Lys279 and Lys318. Lys357 carries the post-translational modification N6-(pyridoxal phosphate)lysine. Thr381 contributes to the pyridoxal 5'-phosphate binding site. Lys413 is modified (N6-acetyllysine; alternate). Position 413 is an N6-succinyllysine; alternate (Lys413). Lys452 and Lys470 each carry N6-acetyllysine.

It belongs to the class-III pyridoxal-phosphate-dependent aminotransferase family. In terms of assembly, homodimer; disulfide-linked. It depends on pyridoxal 5'-phosphate as a cofactor. Requires [2Fe-2S] cluster as cofactor.

It localises to the mitochondrion matrix. The catalysed reaction is 4-aminobutanoate + 2-oxoglutarate = succinate semialdehyde + L-glutamate. It catalyses the reaction (S)-3-amino-2-methylpropanoate + 2-oxoglutarate = 2-methyl-3-oxopropanoate + L-glutamate. Catalyzes the conversion of gamma-aminobutyrate and L-beta-aminoisobutyrate to succinate semialdehyde and methylmalonate semialdehyde, respectively. Can also convert delta-aminovalerate and beta-alanine. This is 4-aminobutyrate aminotransferase, mitochondrial from Mus musculus (Mouse).